Consider the following 434-residue polypeptide: MTTQVVNVIGAGLAGSEAAYQIAKRGVQVKLYEMRPVRQTPAHHTDKFAELVCSNSLRANTLTNAVGVIKEEMRLMDSVIIRAADECSVPAGGALAVDRHEFAAKVTEYVKNHPNVTVMNEEITEIPEGPTVIATGPLTSPDLSAQLKKLTGEDYFYFYDAAAPIVEKDSIDMNKVYLKSRYDKGEAAYLNCPMTEEEFDRFYEALIAAETVPLKEFEKEIFFEGCMPVEVMASRGRQTLVFGPMKPVGLEDPKTGKTPYAVVQLRQDDAAGTLYNIVGFQTHLKWGPQKEVLQLIPGLENAEIVRYGVMHRNTFINSPNLLRPTYQYKQRDDLFFAGQMTGVEGYVESAASGLLAGINAARLVKGEEPVVLPPVTAMGSMANYITATNAKNFQPMNANFGLFTPLEKKIKKKQERNEAYATRALETIQNFVNI.

10-15 lines the FAD pocket; it reads GAGLAG.

This sequence belongs to the MnmG family. TrmFO subfamily. The cofactor is FAD.

It localises to the cytoplasm. It catalyses the reaction uridine(54) in tRNA + (6R)-5,10-methylene-5,6,7,8-tetrahydrofolate + NADH + H(+) = 5-methyluridine(54) in tRNA + (6S)-5,6,7,8-tetrahydrofolate + NAD(+). The catalysed reaction is uridine(54) in tRNA + (6R)-5,10-methylene-5,6,7,8-tetrahydrofolate + NADPH + H(+) = 5-methyluridine(54) in tRNA + (6S)-5,6,7,8-tetrahydrofolate + NADP(+). Catalyzes the folate-dependent formation of 5-methyl-uridine at position 54 (M-5-U54) in all tRNAs. This chain is Methylenetetrahydrofolate--tRNA-(uracil-5-)-methyltransferase TrmFO, found in Bacillus mycoides (strain KBAB4) (Bacillus weihenstephanensis).